The following is a 189-amino-acid chain: Glycerol-3-phosphate acyltransferase (189 aa).

5 helical membrane-spanning segments follow: residues 1–21 (MFWL…AIVL), 50–70 (KLAI…VLLA), 77–97 (LHAQ…PLYF), 111–131 (MLMA…LLTF), and 151–171 (LLAW…VMIV).

The protein belongs to the PlsY family. In terms of assembly, probably interacts with PlsX.

The protein resides in the cell inner membrane. The enzyme catalyses an acyl phosphate + sn-glycerol 3-phosphate = a 1-acyl-sn-glycero-3-phosphate + phosphate. The protein operates within lipid metabolism; phospholipid metabolism. In terms of biological role, catalyzes the transfer of an acyl group from acyl-phosphate (acyl-PO(4)) to glycerol-3-phosphate (G3P) to form lysophosphatidic acid (LPA). This enzyme utilizes acyl-phosphate as fatty acyl donor, but not acyl-CoA or acyl-ACP. The chain is Glycerol-3-phosphate acyltransferase from Pseudomonas putida (strain ATCC 47054 / DSM 6125 / CFBP 8728 / NCIMB 11950 / KT2440).